A 539-amino-acid polypeptide reads, in one-letter code: F-box/WD-40 repeat-containing protein At5g21040 (539 aa).

Residues 65–111 (STTIIDLPQALISEILNCLDPKELGLVSCVSTYLHRLASEHHAWKEF) form the F-box domain. WD repeat units lie at residues 160–199 (GHTE…SIAA), 201–239 (KPLG…RNLF), 255–292 (GHEG…CVKT), 294–330 (RHSD…PLAI), 334–373 (AHEG…SETS), 382–419 (PHTS…KTNR), and 433–477 (PPQR…EIER). The tract at residues 505 to 539 (GRPDQCSIAAHKNPINGERNRAWHSKRRASGKAKA) is disordered. Residues 526-539 (AWHSKRRASGKAKA) are compositionally biased toward basic residues.

The polypeptide is F-box/WD-40 repeat-containing protein At5g21040 (Arabidopsis thaliana (Mouse-ear cress)).